A 261-amino-acid chain; its full sequence is uncharacterized protein (261 aa).

A signal peptide spans 1–22; sequence MKSIKRIGLCISLLILIIFVTS. Cys23 carries N-palmitoyl cysteine lipidation. Cys23 carries the S-diacylglycerol cysteine lipid modification.

The protein belongs to the staphylococcal tandem lipoprotein family.

The protein resides in the cell membrane. This is an uncharacterized protein from Staphylococcus aureus (strain USA300).